A 221-amino-acid polypeptide reads, in one-letter code: uncharacterized protein (221 aa).

It is found in the mitochondrion. This is an uncharacterized protein from Paramecium tetraurelia.